Consider the following 498-residue polypeptide: Probable cytosol aminopeptidase (498 aa).

Mn(2+) is bound by residues lysine 264 and aspartate 269. The active site involves lysine 276. Residues aspartate 287, aspartate 346, and glutamate 348 each coordinate Mn(2+). Residue arginine 350 is part of the active site.

Belongs to the peptidase M17 family. It depends on Mn(2+) as a cofactor.

The protein resides in the cytoplasm. The catalysed reaction is Release of an N-terminal amino acid, Xaa-|-Yaa-, in which Xaa is preferably Leu, but may be other amino acids including Pro although not Arg or Lys, and Yaa may be Pro. Amino acid amides and methyl esters are also readily hydrolyzed, but rates on arylamides are exceedingly low.. The enzyme catalyses Release of an N-terminal amino acid, preferentially leucine, but not glutamic or aspartic acids.. Its function is as follows. Presumably involved in the processing and regular turnover of intracellular proteins. Catalyzes the removal of unsubstituted N-terminal amino acids from various peptides. This is Probable cytosol aminopeptidase from Brucella anthropi (strain ATCC 49188 / DSM 6882 / CCUG 24695 / JCM 21032 / LMG 3331 / NBRC 15819 / NCTC 12168 / Alc 37) (Ochrobactrum anthropi).